A 57-amino-acid polypeptide reads, in one-letter code: Granulin-2 (57 aa).

2 disulfide bridges follow: C4–C16 and C10–C26.

It belongs to the granulin family. In terms of processing, granulins are disulfide bridged. Ubiquitous.

It localises to the secreted. Granulins have possible cytokine-like activity. They may play a role in inflammation, wound repair, and tissue remodeling. The sequence is that of Granulin-2 from Cyprinus carpio (Common carp).